The chain runs to 1129 residues: Phospholipid-transporting ATPase 11C (1129 aa).

Residues 1 to 83 (MFRRTLNRLC…IIFLVQVTVD (83 aa)) lie on the Cytoplasmic side of the membrane. Residues 84 to 104 (TPTSPVTSGLPLFFVITVTAI) form a helical membrane-spanning segment. The Extracellular portion of the chain corresponds to 105–287 (KQGYEDWLRH…SQKCSAVEKS (183 aa)). A helical transmembrane segment spans residues 288–308 (INAFLIVYLFILLTKAAVCTT). The Cytoplasmic portion of the chain corresponds to 309–343 (LKYVWQSSPYNDEPWYNQKTQKERETFQVLKMFTD). The helical transmembrane segment at 344 to 364 (FLSFMVLFNFIIPVSMYVTVE) threads the bilayer. Topologically, residues 365-876 (MQKFLGSFFI…YVRIAHLVQY (512 aa)) are extracellular. The active-site 4-aspartylphosphate intermediate is Asp409. The ATP site is built by Asp409, Lys410, and Thr411. Asp409 contributes to the Mg(2+) binding site. Position 411 (Thr411) interacts with Mg(2+). Residue Ser442 is modified to Phosphoserine. Glu498, Phe540, Lys563, and Arg594 together coordinate ATP. Residues 607–643 (DFERINAQLVEAKMALQDREEKLEKVFDEIETNMNLI) are a coiled coil. Residues Thr674, Gly675, and Asp676 each coordinate ATP. Residues 695–726 (TELLELTTKTIEESERKEDRLHELLIEYRKKL) are a coiled coil. Residues Arg789 and Lys795 each contribute to the ATP site. Residue Asp816 coordinates Mg(2+). ATP contacts are provided by Asn819 and Asp820. Asp820 contributes to the Mg(2+) binding site. Residues 877-897 (FFYKNLCFILPQFLYQFFCGF) traverse the membrane as a helical segment. Topologically, residues 898 to 905 (SQQPLYDA) are cytoplasmic. Residues 906–926 (AYLTMYNICFTSLPILAYSLL) traverse the membrane as a helical segment. The Extracellular segment spans residues 927–952 (EQHINIDTLTADPRLYMKITGNAMLQ). Residues 953–973 (LGPFLHWTFLAAFEGTVFFFG) traverse the membrane as a helical segment. Residues 974–988 (TYFLFQTSSLEDNGK) are Cytoplasmic-facing. A helical membrane pass occupies residues 989–1009 (IYGNWTFGTIVFTVLVFTVTL). Residues 1010 to 1023 (KLALDTRFWTWINH) lie on the Extracellular side of the membrane. The helical transmembrane segment at 1024-1044 (FVIWGSLAFYVFFSFFWGGII) threads the bilayer. The Cytoplasmic portion of the chain corresponds to 1045-1066 (WPFLKQQRMYFVFAQMLCSVST). The helical transmembrane segment at 1067–1087 (WLAIILLIFISLFPEILLIVV) threads the bilayer. The Extracellular segment spans residues 1088 to 1129 (KNVRRRSARRNLSCRRASDSLSARPSVRPLLLRTFSDESNIL). Ser1105, Ser1113, and Ser1123 each carry phosphoserine. Residues 1113-1118 (SVRPLL) carry the Di-leucine motif motif.

It belongs to the cation transport ATPase (P-type) (TC 3.A.3) family. Type IV subfamily. In terms of assembly, component of a P4-ATPase flippase complex which consists of a catalytic alpha subunit ATP11C and an accessory beta subunit TMEM30A. It depends on Mg(2+) as a cofactor. Proteolytically cleaved by CASP3, CASP6 and CASP7. In terms of processing, phosphorylated at Ser-1113 likely by PRKCA; this creates a functional di-leucine motif that is sufficient for endocytosis. As to expression, widely expressed. Expressed in retina, brain, liver and testes (at protein level). Expressed in lung, bone marrow, lymph nodes, prostate, ovary and uterus. Expressed in fetus.

Its subcellular location is the cell membrane. The protein localises to the endoplasmic reticulum membrane. The protein resides in the early endosome membrane. It localises to the recycling endosome membrane. The catalysed reaction is ATP + H2O + phospholipidSide 1 = ADP + phosphate + phospholipidSide 2.. It catalyses the reaction a 1,2-diacyl-sn-glycero-3-phospho-L-serine(out) + ATP + H2O = a 1,2-diacyl-sn-glycero-3-phospho-L-serine(in) + ADP + phosphate + H(+). It carries out the reaction a 1,2-diacyl-sn-glycero-3-phosphoethanolamine(out) + ATP + H2O = a 1,2-diacyl-sn-glycero-3-phosphoethanolamine(in) + ADP + phosphate + H(+). Its function is as follows. Catalytic component of a P4-ATPase flippase complex which catalyzes the hydrolysis of ATP coupled to the transport of aminophospholipids, phosphatidylserines (PS) and phosphatidylethanolamines (PE), from the outer to the inner leaflet of the plasma membrane. Major PS-flippase in immune cell subsets. In erythrocyte plasma membrane, it is required to maintain PS in the inner leaflet preventing its exposure on the surface. This asymmetric distribution is critical for the survival of erythrocytes in circulation since externalized PS is a phagocytic signal for erythrocyte clearance by splenic macrophages. Required for B cell differentiation past the pro-B cell stage. Seems to mediate PS flipping in pro-B cells. May be involved in the transport of cholestatic bile acids. The protein is Phospholipid-transporting ATPase 11C of Mus musculus (Mouse).